A 219-amino-acid polypeptide reads, in one-letter code: GTP-binding protein Rab-3D (219 aa).

Alanine 2 is subject to N-acetylalanine. 29 to 37 (GNSSVGKTS) serves as a coordination point for GDP. GTP-binding residues include serine 31, serine 32, valine 33, glycine 34, lysine 35, threonine 36, serine 37, proline 49, and serine 53. Threonine 36 contributes to the Mg(2+) binding site. The short motif at 49 to 58 (PAFVSTVGID) is the Switch 1 element. Threonine 54 and aspartate 77 together coordinate Mg(2+). Glycine 80 contacts GTP. A Switch 2 motif is present at residues 80–96 (GQERYRTITTAYYRGAM). Threonine 86 is modified (phosphothreonine). GTP is bound by residues asparagine 135, lysine 136, aspartate 138, alanine 166, and lysine 167. GDP is bound by residues 135–138 (NKCD) and 165–167 (SAK). Serine 190 is subject to Phosphoserine. A disordered region spans residues 190 to 219 (SLEPSSSPGSNGKGPALGDTPPPQPSSCGC). Over residues 193-203 (PSSSPGSNGKG) the composition is skewed to low complexity. Residues 209–219 (TPPPQPSSCGC) are compositionally biased toward pro residues. Residues cysteine 217 and cysteine 219 are each lipidated (S-geranylgeranyl cysteine). Cysteine methyl ester; partial is present on cysteine 219.

Belongs to the small GTPase superfamily. Rab family. Interacts with RIMS1, RIMS2, RPH3A and RPH3AL. Interacts with RAB3IP. The GTP-bound form interacts with REP15. Interacts with CHM; phosphorylation at Thr-86 disrupts this interaction. Interacts with MADD (via uDENN domain); the GTP-bound form is preferred for interaction. It depends on Mg(2+) as a cofactor. In fetal glands the majority of the proteins are methylated, whereas in neonatal and adult glands, only 50% are methylated. In terms of processing, phosphorylation of Thr-86 in the switch II region by LRRK2 prevents the association of RAB regulatory proteins, including CHM. As to expression, highest levels found in lung.

It is found in the cell membrane. The enzyme catalyses GTP + H2O = GDP + phosphate + H(+). Its activity is regulated as follows. Regulated by guanine nucleotide exchange factors (GEFs) which promote the exchange of bound GDP for free GTP. Regulated by GTPase activating proteins (GAPs) which increase the GTP hydrolysis activity. Inhibited by GDP dissociation inhibitors (GDIs) which prevent Rab-GDP dissociation. Its function is as follows. The small GTPases Rab are key regulators of intracellular membrane trafficking, from the formation of transport vesicles to their fusion with membranes. Rabs cycle between an inactive GDP-bound form and an active GTP-bound form that is able to recruit to membranes different sets of downstream effectors directly responsible for vesicle formation, movement, tethering and fusion. RAB3D may be involved in the insulin-induced exocytosis of GLUT4-containing vesicles in adipocytes. The chain is GTP-binding protein Rab-3D from Rattus norvegicus (Rat).